The following is a 105-amino-acid chain: Sulfite reductase, dissimilatory-type subunit gamma (105 aa).

This sequence belongs to the DsrC/TusE family. As to quaternary structure, heterohexamer of two alpha, two beta and two gamma subunits.

It is found in the cytoplasm. The catalysed reaction is [DsrC protein]-trisulfide + NAD(+) + 3 H2O = [DsrC protein]-dithiol + sulfite + NADH + 3 H(+). Catalyzes the reduction of sulfite to sulfide. This is the terminal oxidation reaction in sulfate respiration, a process catalyzed by the sulfate-reducing bacteria. This is Sulfite reductase, dissimilatory-type subunit gamma (dsvC) from Nitratidesulfovibrio vulgaris (strain ATCC 29579 / DSM 644 / CCUG 34227 / NCIMB 8303 / VKM B-1760 / Hildenborough) (Desulfovibrio vulgaris).